Consider the following 434-residue polypeptide: Trigger factor (434 aa).

The PPIase FKBP-type domain maps to 161-246 (EDRVTVDFNG…LKKVEERELP (86 aa)).

The protein belongs to the FKBP-type PPIase family. Tig subfamily.

The protein localises to the cytoplasm. The enzyme catalyses [protein]-peptidylproline (omega=180) = [protein]-peptidylproline (omega=0). In terms of biological role, involved in protein export. Acts as a chaperone by maintaining the newly synthesized protein in an open conformation. Functions as a peptidyl-prolyl cis-trans isomerase. This is Trigger factor from Proteus mirabilis (strain HI4320).